Here is a 333-residue protein sequence, read N- to C-terminus: Biotin synthase (333 aa).

The Radical SAM core domain maps to 51–281 (HFGNQVSLCG…DVHITICGGR (231 aa)). Residues cysteine 69, cysteine 73, and cysteine 76 each contribute to the [4Fe-4S] cluster site. Position 206 (cysteine 206) interacts with [2Fe-2S] cluster.

It belongs to the radical SAM superfamily. Biotin synthase family. In terms of assembly, homodimer. The cofactor is [4Fe-4S] cluster. [2Fe-2S] cluster is required as a cofactor.

It carries out the reaction (4R,5S)-dethiobiotin + (sulfur carrier)-SH + 2 reduced [2Fe-2S]-[ferredoxin] + 2 S-adenosyl-L-methionine = (sulfur carrier)-H + biotin + 2 5'-deoxyadenosine + 2 L-methionine + 2 oxidized [2Fe-2S]-[ferredoxin]. Its pathway is cofactor biosynthesis; biotin biosynthesis; biotin from 7,8-diaminononanoate: step 2/2. In terms of biological role, catalyzes the conversion of dethiobiotin (DTB) to biotin by the insertion of a sulfur atom into dethiobiotin via a radical-based mechanism. This Trichlorobacter lovleyi (strain ATCC BAA-1151 / DSM 17278 / SZ) (Geobacter lovleyi) protein is Biotin synthase.